The primary structure comprises 561 residues: Dihydroxy-acid dehydratase (561 aa).

Residue Cys50 participates in [2Fe-2S] cluster binding. Residue Asp82 coordinates Mg(2+). Cys123 lines the [2Fe-2S] cluster pocket. Residues Asp124 and Lys125 each contribute to the Mg(2+) site. Lys125 is subject to N6-carboxylysine. Cys195 serves as a coordination point for [2Fe-2S] cluster. Residue Glu447 coordinates Mg(2+). Ser473 functions as the Proton acceptor in the catalytic mechanism.

Belongs to the IlvD/Edd family. In terms of assembly, homodimer. [2Fe-2S] cluster serves as cofactor. Requires Mg(2+) as cofactor.

It carries out the reaction (2R)-2,3-dihydroxy-3-methylbutanoate = 3-methyl-2-oxobutanoate + H2O. The enzyme catalyses (2R,3R)-2,3-dihydroxy-3-methylpentanoate = (S)-3-methyl-2-oxopentanoate + H2O. The protein operates within amino-acid biosynthesis; L-isoleucine biosynthesis; L-isoleucine from 2-oxobutanoate: step 3/4. Its pathway is amino-acid biosynthesis; L-valine biosynthesis; L-valine from pyruvate: step 3/4. In terms of biological role, functions in the biosynthesis of branched-chain amino acids. Catalyzes the dehydration of (2R,3R)-2,3-dihydroxy-3-methylpentanoate (2,3-dihydroxy-3-methylvalerate) into 2-oxo-3-methylpentanoate (2-oxo-3-methylvalerate) and of (2R)-2,3-dihydroxy-3-methylbutanoate (2,3-dihydroxyisovalerate) into 2-oxo-3-methylbutanoate (2-oxoisovalerate), the penultimate precursor to L-isoleucine and L-valine, respectively. This is Dihydroxy-acid dehydratase from Acaryochloris marina (strain MBIC 11017).